A 1021-amino-acid polypeptide reads, in one-letter code: MAGKGKTAARTLEDLTLDSGYGGAADSFRSSSVSLCCSDTHLSYAHGGNCWHLTESMHSRHNSLDTVNTVLAEDTEILECSGQCAKLPELEEDVPWSLGEVEGALRKDEELCVGNASREILAKLSALVSRALVRIAREAQRMSLRYARCTKHEIQSAIKMVLSWTISVNCITAALSALSLYNMSTGDKFSRGKSTRCGLIFSVGKFFRWMVDSRVALRIHEHAAIYLSACMESLFREVFTRVQRSALVEKENGVPKFSVESLEQAINNDSELWGLLQPYQHLICGKNASGVLSLPDSLNLHRDQQRAGKTGEGHAYSQAELRTIEQSLLATRVGSIAELSDLVSRAMHHLQPLHIKNPSNGTPVHQNRTGSVHWEPEALYTLCYFMHCPQMEWENPNVEPSKITLHTERPFLVLPPLMEWIRVAVAHTEHRRSFSVDSDDVRQAARLLLPGVDCEPRQLKADDCFCATRKLDAASTEAKFLQDLGFRMLNCGRTDLVKQAVNLLGPDGINSMSEQGMTPLMYSCVRGDEAMVQMLLDAGADINSEVPSSLHKHPSVYPDTRQGTPLTFAVLHGHVPVVQLLLDARANVEGAIQESTENYTETPLQLASAAGNFELVSLLLERGADPLIGTTYRNGISSGPLGEMNSYSLAAAHGHRNVFRKLLSQVEKDKGDVLSLEEMLAEGSEAVERRAPQNEGTLRTGKAKLRALREAMYHSAEHGHVDITIDIRSLGVPWTLHTWLESLRTCFVQQRRPLIQGLLKDFSCIKEDEYTEELITHGLPLMFQILRASKNEVISQQLSVIFTQCYGPFPIPKLTEIKKKQTSRLDPHFLNNKEMSDVTFLVEGKPFYAHKVLLFTASPRFKSLLSNRPAAENTCIEISHVKYNIFQLVMQYLYCGGTESLHIRNTEIMELLSAAKFFQLDALQRHCEIICSKNITNDSCVDIYKHARFLGALELAGFIEGFFLKNMVLLIELENFKQLLYEVPADSPGPGPSYDVLHDLEQTLALRIRSIHLSTSKGSIV.

A helical membrane pass occupies residues 160-180; it reads MVLSWTISVNCITAALSALSL. 4 ANK repeats span residues 515–544, 561–590, 599–628, and 642–671; these read QGMT…DINS, RQGT…NVEG, YTET…DPLI, and GEMN…KDKG. A BTB domain is found at 836–902; the sequence is SDVTFLVEGK…LYCGGTESLH (67 aa).

It is found in the membrane. This Danio rerio (Zebrafish) protein is Ankyrin repeat- and BTB/POZ domain-containing protein 3-A (abtb3a).